Reading from the N-terminus, the 287-residue chain is Putative sugar uptake protein spyM18_2243 (287 aa).

The next 10 helical transmembrane spans lie at 4–26 (IFYALIPMFTWGSIGFVSNKIGG), 33–50 (LGMTFGALLFSLAVWLIV), 55–72 (TLQLWLFGILGGFIWSIG), 85–107 (VSVANPLSSGSQLVLGSLIGVLV), 117–134 (FVVGSLALLLLIVGFYFS), 154–171 (FRALTYSTIGYVMYAVLF), 181–200 (SVILPMAVGMVLGAITFMSF), 207–229 (YVIKNSVVGLLWGIGNIFMLLAA), 234–256 (LAIAFSFSQLGAIISIVGGILFL), and 268–285 (VVTGIICFIVGAILLGVV).

It belongs to the GRP transporter (TC 2.A.7.5) family.

It is found in the cell membrane. This Streptococcus pyogenes serotype M18 (strain MGAS8232) protein is Putative sugar uptake protein spyM18_2243.